The following is a 172-amino-acid chain: RTX-I toxin-activating lysine-acyltransferase ApxIC (172 aa).

Catalysis depends on residues histidine 24 and aspartate 93.

Belongs to the RTX toxin acyltransferase family. As to quaternary structure, homodimer.

The protein localises to the cytoplasm. It catalyses the reaction a fatty acyl-[ACP] + L-lysyl-[protein] = N(6)-(fatty acyl)-L-lysyl-[protein] + holo-[ACP] + H(+). Protein-lysine acyltransferase that catalyzes fatty acylation of the protoxin, thereby converting it to the active toxin. In Actinobacillus pleuropneumoniae (Haemophilus pleuropneumoniae), this protein is RTX-I toxin-activating lysine-acyltransferase ApxIC.